Here is a 1095-residue protein sequence, read N- to C-terminus: DNA-directed RNA polymerase subunit beta (1095 aa).

Residues 1069–1095 (DLMQDVNPRRSTPSRPTYESLGKEYEE) form a disordered region.

This sequence belongs to the RNA polymerase beta chain family. In terms of assembly, in cyanobacteria the RNAP catalytic core is composed of 2 alpha, 1 beta, 1 beta', 1 gamma and 1 omega subunit. When a sigma factor is associated with the core the holoenzyme is formed, which can initiate transcription.

The catalysed reaction is RNA(n) + a ribonucleoside 5'-triphosphate = RNA(n+1) + diphosphate. Functionally, DNA-dependent RNA polymerase catalyzes the transcription of DNA into RNA using the four ribonucleoside triphosphates as substrates. In Prochlorococcus marinus (strain NATL1A), this protein is DNA-directed RNA polymerase subunit beta.